A 210-amino-acid chain; its full sequence is Menaquinone reductase, multiheme cytochrome c subunit (210 aa).

The helical transmembrane segment at 20–40 threads the bilayer; that stretch reads GGAAPFFVGLVVALVFGWWAF. Heme contacts are provided by C67, C70, H71, C88, C91, H92, C140, C143, H144, C152, C155, H156, C186, C189, H190, C205, C208, and H209.

This sequence belongs to the multiheme cytochrome c family. In terms of assembly, the Qrc complex is composed of four subunits: QrcA, QrcB, QrcC and QrcD. Can form a supercomplex with the [NiFe] hydrogenase HynA1 and the tetraheme Type I cytochrome c3 TpIc(3), its physiological electron donors. The cofactor is heme c.

It localises to the cell inner membrane. In terms of biological role, component of the respiratory Qrc complex, that catalyzes the reduction of the menaquinone pool using electrons transferred from the reduced periplasmic cytochrome c3, and which is probably involved in sulfate respiration. Is likely essential for growth on H(2) or formate since the periplasmic hydrogenases and/or formate dehydrogenases act as primary electron donors for the Qrc complex. The chain is Menaquinone reductase, multiheme cytochrome c subunit from Nitratidesulfovibrio vulgaris (strain ATCC 29579 / DSM 644 / CCUG 34227 / NCIMB 8303 / VKM B-1760 / Hildenborough) (Desulfovibrio vulgaris).